A 426-amino-acid chain; its full sequence is Glutamate-1-semialdehyde 2,1-aminomutase (426 aa).

K264 carries the N6-(pyridoxal phosphate)lysine modification.

This sequence belongs to the class-III pyridoxal-phosphate-dependent aminotransferase family. HemL subfamily. Requires pyridoxal 5'-phosphate as cofactor.

Its subcellular location is the cytoplasm. The enzyme catalyses (S)-4-amino-5-oxopentanoate = 5-aminolevulinate. Its pathway is porphyrin-containing compound metabolism; protoporphyrin-IX biosynthesis; 5-aminolevulinate from L-glutamyl-tRNA(Glu): step 2/2. This is Glutamate-1-semialdehyde 2,1-aminomutase from Methanocella arvoryzae (strain DSM 22066 / NBRC 105507 / MRE50).